The chain runs to 360 residues: Peptide chain release factor 1 (360 aa).

Glutamine 234 is modified (N5-methylglutamine).

The protein belongs to the prokaryotic/mitochondrial release factor family. In terms of processing, methylated by PrmC. Methylation increases the termination efficiency of RF1.

The protein localises to the cytoplasm. Functionally, peptide chain release factor 1 directs the termination of translation in response to the peptide chain termination codons UAG and UAA. This chain is Peptide chain release factor 1, found in Clostridium perfringens (strain 13 / Type A).